A 152-amino-acid polypeptide reads, in one-letter code: Transcriptional regulator MraZ (152 aa).

SpoVT-AbrB domains are found at residues Ala-5–Glu-52 and Ala-81–Thr-124.

It belongs to the MraZ family. Forms oligomers.

It localises to the cytoplasm. It is found in the nucleoid. Its function is as follows. Negatively regulates its own expression and that of the subsequent genes in the proximal part of the division and cell wall (dcw) gene cluster. Acts by binding directly to DNA. May also regulate the expression of genes outside the dcw cluster. This is Transcriptional regulator MraZ from Citrobacter koseri (strain ATCC BAA-895 / CDC 4225-83 / SGSC4696).